Reading from the N-terminus, the 62-residue chain is uncharacterized protein (62 aa).

The signal sequence occupies residues 1–22 (MVNVALLLDQIIATPLRSMVEA).

This is an uncharacterized protein from Archaeoglobus fulgidus (strain ATCC 49558 / DSM 4304 / JCM 9628 / NBRC 100126 / VC-16).